The primary structure comprises 213 residues: MDTIWDISPPIAPATPVWPGDTPVGIERVWRIEAGSPVNVARVTLSPHTGAHADAPLHYDADGAPIGAVPLDAYLGRCRVIHCIGARSAVTPEHVRAALAGAPPRVLLRTYGQAPQHAWDSAFCAVAPETIDLLAAHGVRLVGIDTPSLDPQESKTMDAHRRIRAHRMAILEGLVLDEIAAGDYELIALPLKFATLDASPVRAVLRALPDAPR.

Tryptophan 18 contributes to the substrate binding site. 3 residues coordinate Zn(2+): histidine 48, histidine 52, and aspartate 54. Histidine 58 serves as the catalytic Proton donor/acceptor. Zn(2+) is bound by residues histidine 160 and glutamate 172.

This sequence belongs to the Cyclase 1 superfamily. KynB family. As to quaternary structure, homodimer. It depends on Zn(2+) as a cofactor.

It carries out the reaction N-formyl-L-kynurenine + H2O = L-kynurenine + formate + H(+). Its pathway is amino-acid degradation; L-tryptophan degradation via kynurenine pathway; L-kynurenine from L-tryptophan: step 2/2. In terms of biological role, catalyzes the hydrolysis of N-formyl-L-kynurenine to L-kynurenine, the second step in the kynurenine pathway of tryptophan degradation. This Burkholderia pseudomallei (strain 1106a) protein is Kynurenine formamidase.